A 212-amino-acid chain; its full sequence is ER lumen protein-retaining receptor 1-A (212 aa).

Residues 1 to 4 (MNIF) are Lumenal-facing. The chain crosses the membrane as a helical span at residues 5-24 (RFLGDISHLSAIFILLLKIW). Over 25–32 (KSRSCAGI) the chain is Cytoplasmic. A helical membrane pass occupies residues 33–52 (SGKSQLLFAIVFTARYLDLF). The segment at 47–48 (RY) is interaction with the K-D-E-L motif on target proteins. Over 53 to 58 (TNYISF) the chain is Lumenal. A helical transmembrane segment spans residues 59–79 (YNTSMKVVYVASSYATVWMIY). Topologically, residues 80 to 92 (SKFKATYDGNHDT) are cytoplasmic. The chain crosses the membrane as a helical span at residues 93–110 (FRVEFLIVPTAILAFLVN). Over 111 to 116 (HDFTPL) the chain is Lumenal. The helical transmembrane segment at 117-135 (EIFWTFSIYLESVAILPQL) threads the bilayer. Over 136-149 (FMVSKTGEAETITS) the chain is Cytoplasmic. Residues 150-168 (HYLFALGIYRTLYLFNWIW) form a helical membrane-spanning segment. The interaction with the K-D-E-L motif on target proteins stretch occupies residues 159 to 169 (RTLYLFNWIWR). The Lumenal segment spans residues 169 to 178 (RYQFEGFFDL). A helical membrane pass occupies residues 179 to 199 (IAIVAGLVQTVLYCDFFYLYV). The Cytoplasmic portion of the chain corresponds to 200 to 212 (TKVLKGKKLSLPA). An important for recycling of cargo proteins with the sequence motif K-D-E-L from the Golgi to the endoplasmic reticulum region spans residues 204 to 207 (KGKK).

This sequence belongs to the ERD2 family.

It localises to the golgi apparatus membrane. The protein localises to the cytoplasmic vesicle. Its subcellular location is the COPI-coated vesicle membrane. The protein resides in the endoplasmic reticulum membrane. It is found in the endoplasmic reticulum-Golgi intermediate compartment membrane. Receptor for the C-terminal sequence motif K-D-E-L that is present on endoplasmic reticulum resident proteins and that mediates their recycling from the Golgi back to the endoplasmic reticulum. The sequence is that of ER lumen protein-retaining receptor 1-A (kdelr1-a) from Xenopus laevis (African clawed frog).